Reading from the N-terminus, the 299-residue chain is Non-homologous end joining protein Ku (299 aa).

The Ku domain maps to 10 to 188 (ISFGLVHIPV…TEAVTDARLT (179 aa)). Disordered regions lie at residues 227 to 249 (AGEGKIEDVETDPGEEERKSADV) and 261 to 299 (AGKSSASKTRKPAAKDKVADKQSPKPKRPAVRKKTGKAS). The span at 273-283 (AAKDKVADKQS) shows a compositional bias: basic and acidic residues. Over residues 284–299 (PKPKRPAVRKKTGKAS) the composition is skewed to basic residues.

The protein belongs to the prokaryotic Ku family. In terms of assembly, homodimer. Interacts with LigD.

Functionally, with LigD forms a non-homologous end joining (NHEJ) DNA repair enzyme, which repairs dsDNA breaks with reduced fidelity. Binds linear dsDNA with 5'- and 3'- overhangs but not closed circular dsDNA nor ssDNA. Recruits and stimulates the ligase activity of LigD. The protein is Non-homologous end joining protein Ku of Pseudomonas syringae pv. tomato (strain ATCC BAA-871 / DC3000).